Here is a 174-residue protein sequence, read N- to C-terminus: Large ribosomal subunit protein uL18 (174 aa).

This sequence belongs to the universal ribosomal protein uL18 family. As to quaternary structure, part of the 50S ribosomal subunit. Contacts the 5S and 23S rRNAs.

Functionally, this is one of the proteins that bind and probably mediate the attachment of the 5S RNA into the large ribosomal subunit, where it forms part of the central protuberance. The polypeptide is Large ribosomal subunit protein uL18 (Methanosarcina barkeri (strain Fusaro / DSM 804)).